Reading from the N-terminus, the 278-residue chain is Large ribosomal subunit protein uL2 (278 aa).

2 disordered regions span residues 27–58 (STPE…GGGH) and 224–278 (VVMN…GKKR). Residues 37–58 (LHGKGGRNAHGRITTRHKGGGH) are compositionally biased toward basic residues. Residues 253-268 (PEGRTRKPNKPSDKLI) show a composition bias toward basic and acidic residues. Basic residues predominate over residues 269–278 (VRRRRTGKKR).

This sequence belongs to the universal ribosomal protein uL2 family. As to quaternary structure, part of the 50S ribosomal subunit. Forms a bridge to the 30S subunit in the 70S ribosome.

Functionally, one of the primary rRNA binding proteins. Required for association of the 30S and 50S subunits to form the 70S ribosome, for tRNA binding and peptide bond formation. It has been suggested to have peptidyltransferase activity; this is somewhat controversial. Makes several contacts with the 16S rRNA in the 70S ribosome. This chain is Large ribosomal subunit protein uL2, found in Mycobacterium sp. (strain KMS).